The sequence spans 351 residues: Holliday junction branch migration complex subunit RuvB (351 aa).

The large ATPase domain (RuvB-L) stretch occupies residues 4-199 (DNPQFNQWYE…FGIINSLQYY (196 aa)). ATP contacts are provided by residues L38, R39, G80, K83, T84, T85, 146 to 148 (EDY), R189, Y199, and R236. T84 provides a ligand contact to Mg(2+). The segment at 200 to 270 (TPEELQQIVV…IVTIGLDKLR (71 aa)) is small ATPAse domain (RuvB-S). The interval 273-351 (NRGLDETDHK…HLGHAYQRKL (79 aa)) is head domain (RuvB-H). 2 residues coordinate DNA: R328 and R333.

The protein belongs to the RuvB family. In terms of assembly, homohexamer. Forms an RuvA(8)-RuvB(12)-Holliday junction (HJ) complex. HJ DNA is sandwiched between 2 RuvA tetramers; dsDNA enters through RuvA and exits via RuvB. An RuvB hexamer assembles on each DNA strand where it exits the tetramer. Each RuvB hexamer is contacted by two RuvA subunits (via domain III) on 2 adjacent RuvB subunits; this complex drives branch migration. In the full resolvosome a probable DNA-RuvA(4)-RuvB(12)-RuvC(2) complex forms which resolves the HJ.

It localises to the cytoplasm. The enzyme catalyses ATP + H2O = ADP + phosphate + H(+). The RuvA-RuvB-RuvC complex processes Holliday junction (HJ) DNA during genetic recombination and DNA repair, while the RuvA-RuvB complex plays an important role in the rescue of blocked DNA replication forks via replication fork reversal (RFR). RuvA specifically binds to HJ cruciform DNA, conferring on it an open structure. The RuvB hexamer acts as an ATP-dependent pump, pulling dsDNA into and through the RuvAB complex. RuvB forms 2 homohexamers on either side of HJ DNA bound by 1 or 2 RuvA tetramers; 4 subunits per hexamer contact DNA at a time. Coordinated motions by a converter formed by DNA-disengaged RuvB subunits stimulates ATP hydrolysis and nucleotide exchange. Immobilization of the converter enables RuvB to convert the ATP-contained energy into a lever motion, pulling 2 nucleotides of DNA out of the RuvA tetramer per ATP hydrolyzed, thus driving DNA branch migration. The RuvB motors rotate together with the DNA substrate, which together with the progressing nucleotide cycle form the mechanistic basis for DNA recombination by continuous HJ branch migration. Branch migration allows RuvC to scan DNA until it finds its consensus sequence, where it cleaves and resolves cruciform DNA. The polypeptide is Holliday junction branch migration complex subunit RuvB (Leuconostoc mesenteroides subsp. mesenteroides (strain ATCC 8293 / DSM 20343 / BCRC 11652 / CCM 1803 / JCM 6124 / NCDO 523 / NBRC 100496 / NCIMB 8023 / NCTC 12954 / NRRL B-1118 / 37Y)).